Reading from the N-terminus, the 427-residue chain is Sialic acid TRAP transporter large permease protein SiaM (427 aa).

Helical transmembrane passes span 11 to 31 (LLFA…AFLI), 52 to 72 (FTLL…SAGI), 82 to 102 (SLVG…SLLF), 140 to 160 (ASCI…YGVV), 165 to 185 (IGAL…ALMV), 214 to 234 (AFLS…GKFT), 246 to 266 (ALFL…IEIL), 270 to 290 (VNTT…GWIV), 301 to 321 (DYFL…NLLL), 322 to 342 (LFLG…PFLV), 348 to 368 (VGID…IGIL), and 394 to 414 (VLPL…FPQF).

Belongs to the TRAP transporter large permease family. As to quaternary structure, the complex comprises the extracytoplasmic solute receptor protein SiaP, and the two transmembrane proteins SiaQ and SiaM. SiaQ and SiaM form a tight 1:1 complex.

It is found in the cell inner membrane. Part of the tripartite ATP-independent periplasmic (TRAP) transport system SiaPQM that catalyzes unidirectional Na(+)-dependent sialic acid uptake. In Vibrio cholerae serotype O1 (strain ATCC 39315 / El Tor Inaba N16961), this protein is Sialic acid TRAP transporter large permease protein SiaM.